The sequence spans 397 residues: Acetate kinase 2 (397 aa).

Asparagine 10 provides a ligand contact to Mg(2+). Lysine 17 is an ATP binding site. Substrate is bound at residue arginine 90. The active-site Proton donor/acceptor is the aspartate 147. ATP contacts are provided by residues 207 to 211 (HLGNG), 281 to 283 (DAR), and 329 to 333 (GIGEN). Position 385 (glutamate 385) interacts with Mg(2+).

The protein belongs to the acetokinase family. In terms of assembly, homodimer. Mg(2+) is required as a cofactor. Mn(2+) serves as cofactor.

The protein localises to the cytoplasm. It carries out the reaction acetate + ATP = acetyl phosphate + ADP. The protein operates within metabolic intermediate biosynthesis; acetyl-CoA biosynthesis; acetyl-CoA from acetate: step 1/2. Catalyzes the formation of acetyl phosphate from acetate and ATP. Can also catalyze the reverse reaction. This is Acetate kinase 2 from Vibrio parahaemolyticus serotype O3:K6 (strain RIMD 2210633).